The following is a 51-amino-acid chain: Large ribosomal subunit protein eL39 (51 aa).

This sequence belongs to the eukaryotic ribosomal protein eL39 family.

The sequence is that of Large ribosomal subunit protein eL39 (rpl39e) from Pyrococcus abyssi (strain GE5 / Orsay).